The chain runs to 141 residues: VLSAADKGHVKAIWGKVGGHAGEYAAEGLERTFHSFPTTKTYFPHFDLSHGSAQIQAHGKKIADALGQAVEHIDDLPGTLSKLSDLHAHKLRVDPVNFKLLSHCLLVTFAAHLGDAFTPEVHASLDKFLAAVSTVLTSKYR.

In terms of domain architecture, Globin spans 1 to 141 (VLSAADKGHV…VSTVLTSKYR (141 aa)). S3 bears the Phosphoserine mark. N6-succinyllysine is present on residues K7 and K11. Residue K16 is modified to N6-acetyllysine; alternate. Position 16 is an N6-succinyllysine; alternate (K16). At Y24 the chain carries Phosphotyrosine. The residue at position 35 (S35) is a Phosphoserine. At K40 the chain carries N6-succinyllysine. S49 is subject to Phosphoserine. An O2-binding site is contributed by H58. H87 serves as a coordination point for heme b. Position 102 is a phosphoserine (S102). T108 is subject to Phosphothreonine. S124 carries the post-translational modification Phosphoserine. Residues T134 and T137 each carry the phosphothreonine modification. S138 bears the Phosphoserine mark.

It belongs to the globin family. As to quaternary structure, heterotetramer of two alpha chains and two beta chains. As to expression, red blood cells.

Its function is as follows. Involved in oxygen transport from the lung to the various peripheral tissues. Functionally, hemopressin acts as an antagonist peptide of the cannabinoid receptor CNR1. Hemopressin-binding efficiently blocks cannabinoid receptor CNR1 and subsequent signaling. This chain is Hemoglobin subunit alpha (HBA), found in Macropus giganteus (Eastern gray kangaroo).